Reading from the N-terminus, the 194-residue chain is GTP cyclohydrolase 1 (194 aa).

Cysteine 83, histidine 86, and cysteine 155 together coordinate Zn(2+).

This sequence belongs to the GTP cyclohydrolase I family. In terms of assembly, toroid-shaped homodecamer, composed of two pentamers of five dimers.

It carries out the reaction GTP + H2O = 7,8-dihydroneopterin 3'-triphosphate + formate + H(+). The protein operates within cofactor biosynthesis; 7,8-dihydroneopterin triphosphate biosynthesis; 7,8-dihydroneopterin triphosphate from GTP: step 1/1. The sequence is that of GTP cyclohydrolase 1 (folE) from Streptococcus pyogenes.